The sequence spans 359 residues: Dihydroorotate dehydrogenase (quinone) (359 aa).

FMN contacts are provided by residues 61-65 and T85; that span reads AGYDK. A substrate-binding site is contributed by K65. 110-114 contacts substrate; the sequence is NRLGF. Positions 139 and 170 each coordinate FMN. Substrate is bound at residue N170. Residue S173 is the Nucleophile of the active site. N175 is a substrate binding site. The FMN site is built by K211 and S239. Position 240–241 (240–241) interacts with substrate; that stretch reads NT. Residues G262, G291, and 312 to 313 each bind FMN; that span reads YT.

Belongs to the dihydroorotate dehydrogenase family. Type 2 subfamily. Monomer. The cofactor is FMN.

The protein resides in the cell membrane. The enzyme catalyses (S)-dihydroorotate + a quinone = orotate + a quinol. The protein operates within pyrimidine metabolism; UMP biosynthesis via de novo pathway; orotate from (S)-dihydroorotate (quinone route): step 1/1. In terms of biological role, catalyzes the conversion of dihydroorotate to orotate with quinone as electron acceptor. The chain is Dihydroorotate dehydrogenase (quinone) from Mesorhizobium japonicum (strain LMG 29417 / CECT 9101 / MAFF 303099) (Mesorhizobium loti (strain MAFF 303099)).